The chain runs to 917 residues: Protein translocase subunit SecA (917 aa).

ATP is bound by residues Q87, 105-109 (GEGKT), and D513. A disordered region spans residues 834 to 917 (EEQMNEMEKR…YKSCHGKLTG (84 aa)). Basic and acidic residues predominate over residues 839-852 (EMEKRRQEEAERQR). The segment covering 862 to 876 (APSQLAAPATPATPE) has biased composition (low complexity). Zn(2+) is bound by residues C900, C902, C911, and H912.

The protein belongs to the SecA family. In terms of assembly, monomer and homodimer. Part of the essential Sec protein translocation apparatus which comprises SecA, SecYEG and auxiliary proteins SecDF-YajC and YidC. Zn(2+) is required as a cofactor.

The protein localises to the cell inner membrane. Its subcellular location is the cytoplasm. The enzyme catalyses ATP + H2O + cellular proteinSide 1 = ADP + phosphate + cellular proteinSide 2.. Its function is as follows. Part of the Sec protein translocase complex. Interacts with the SecYEG preprotein conducting channel. Has a central role in coupling the hydrolysis of ATP to the transfer of proteins into and across the cell membrane, serving both as a receptor for the preprotein-SecB complex and as an ATP-driven molecular motor driving the stepwise translocation of polypeptide chains across the membrane. The chain is Protein translocase subunit SecA from Saccharophagus degradans (strain 2-40 / ATCC 43961 / DSM 17024).